A 384-amino-acid chain; its full sequence is S-adenosylmethionine synthase (384 aa).

An ATP-binding site is contributed by histidine 15. Aspartate 17 lines the Mg(2+) pocket. Glutamate 43 contacts K(+). Positions 56 and 99 each coordinate L-methionine. The tract at residues 99 to 109 is flexible loop; that stretch reads QSPDINQGVDR. Residues 164–166, 231–232, aspartate 240, 246–247, alanine 263, and lysine 267 each bind ATP; these read DAK, RF, and RK. Aspartate 240 serves as a coordination point for L-methionine. An L-methionine-binding site is contributed by lysine 271.

The protein belongs to the AdoMet synthase family. Homotetramer; dimer of dimers. The cofactor is Mg(2+). It depends on K(+) as a cofactor.

It is found in the cytoplasm. It catalyses the reaction L-methionine + ATP + H2O = S-adenosyl-L-methionine + phosphate + diphosphate. The protein operates within amino-acid biosynthesis; S-adenosyl-L-methionine biosynthesis; S-adenosyl-L-methionine from L-methionine: step 1/1. In terms of biological role, catalyzes the formation of S-adenosylmethionine (AdoMet) from methionine and ATP. The overall synthetic reaction is composed of two sequential steps, AdoMet formation and the subsequent tripolyphosphate hydrolysis which occurs prior to release of AdoMet from the enzyme. The polypeptide is S-adenosylmethionine synthase (Shewanella pealeana (strain ATCC 700345 / ANG-SQ1)).